The chain runs to 723 residues: Fatty acid oxidation complex subunit alpha (723 aa).

Residues 1-189 (MIYQADTLQV…KIGLLDAVVE (189 aa)) are enoyl-CoA hydratase/isomerase. Residue aspartate 296 participates in substrate binding. A 3-hydroxyacyl-CoA dehydrogenase region spans residues 311–723 (SKDTERAAVL…FYGAQQQGSI (413 aa)). Residues methionine 325, aspartate 344, 401–403 (VVE), lysine 408, and serine 430 contribute to the NAD(+) site. Residue histidine 451 is the For 3-hydroxyacyl-CoA dehydrogenase activity of the active site. Asparagine 454 contacts NAD(+). Residues asparagine 501 and tyrosine 661 each coordinate substrate.

In the N-terminal section; belongs to the enoyl-CoA hydratase/isomerase family. The protein in the C-terminal section; belongs to the 3-hydroxyacyl-CoA dehydrogenase family. As to quaternary structure, heterotetramer of two alpha chains (FadB) and two beta chains (FadA).

The enzyme catalyses a (3S)-3-hydroxyacyl-CoA + NAD(+) = a 3-oxoacyl-CoA + NADH + H(+). The catalysed reaction is a (3S)-3-hydroxyacyl-CoA = a (2E)-enoyl-CoA + H2O. It catalyses the reaction a 4-saturated-(3S)-3-hydroxyacyl-CoA = a (3E)-enoyl-CoA + H2O. It carries out the reaction (3S)-3-hydroxybutanoyl-CoA = (3R)-3-hydroxybutanoyl-CoA. The enzyme catalyses a (3Z)-enoyl-CoA = a 4-saturated (2E)-enoyl-CoA. The catalysed reaction is a (3E)-enoyl-CoA = a 4-saturated (2E)-enoyl-CoA. It participates in lipid metabolism; fatty acid beta-oxidation. Its function is as follows. Involved in the aerobic and anaerobic degradation of long-chain fatty acids via beta-oxidation cycle. Catalyzes the formation of 3-oxoacyl-CoA from enoyl-CoA via L-3-hydroxyacyl-CoA. It can also use D-3-hydroxyacyl-CoA and cis-3-enoyl-CoA as substrate. This is Fatty acid oxidation complex subunit alpha from Vibrio parahaemolyticus serotype O3:K6 (strain RIMD 2210633).